We begin with the raw amino-acid sequence, 413 residues long: Coiled-coil domain-containing protein 83 (413 aa).

The disordered stretch occupies residues 1-21 (MENSGKANKKDTHDGPPKEIK). Positions 8–21 (NKKDTHDGPPKEIK) are enriched in basic and acidic residues. 2 coiled-coil regions span residues 37 to 184 (EDAV…RKKI) and 216 to 256 (WEND…LSNC).

The polypeptide is Coiled-coil domain-containing protein 83 (CCDC83) (Homo sapiens (Human)).